A 133-amino-acid polypeptide reads, in one-letter code: Large ribosomal subunit protein uL14 (133 aa).

It belongs to the universal ribosomal protein uL14 family. Part of the 50S ribosomal subunit. Forms a cluster with proteins L3 and L19. In the 70S ribosome, L14 and L19 interact and together make contacts with the 16S rRNA in bridges B5 and B8.

Functionally, binds to 23S rRNA. Forms part of two intersubunit bridges in the 70S ribosome. The chain is Large ribosomal subunit protein uL14 from Gloeobacter violaceus (strain ATCC 29082 / PCC 7421).